A 1162-amino-acid polypeptide reads, in one-letter code: DNA-directed RNA polymerase subunit beta (1162 aa).

Belongs to the RNA polymerase beta chain family. As to quaternary structure, the RNAP catalytic core consists of 2 alpha, 1 beta, 1 beta' and 1 omega subunit. When a sigma factor is associated with the core the holoenzyme is formed, which can initiate transcription.

It carries out the reaction RNA(n) + a ribonucleoside 5'-triphosphate = RNA(n+1) + diphosphate. DNA-dependent RNA polymerase catalyzes the transcription of DNA into RNA using the four ribonucleoside triphosphates as substrates. The chain is DNA-directed RNA polymerase subunit beta from Clavibacter michiganensis subsp. michiganensis (strain NCPPB 382).